Consider the following 207-residue polypeptide: Ribosome maturation factor RimM (207 aa).

The PRC barrel domain maps to 130–207 (EDEFYWVDLI…RIVVDWGLDY (78 aa)).

Belongs to the RimM family. In terms of assembly, binds ribosomal protein uS19.

It localises to the cytoplasm. In terms of biological role, an accessory protein needed during the final step in the assembly of 30S ribosomal subunit, possibly for assembly of the head region. Essential for efficient processing of 16S rRNA. May be needed both before and after RbfA during the maturation of 16S rRNA. It has affinity for free ribosomal 30S subunits but not for 70S ribosomes. The chain is Ribosome maturation factor RimM from Cupriavidus taiwanensis (strain DSM 17343 / BCRC 17206 / CCUG 44338 / CIP 107171 / LMG 19424 / R1) (Ralstonia taiwanensis (strain LMG 19424)).